The primary structure comprises 243 residues: Ornithine decarboxylase antizyme 3 (243 aa).

Phosphoserine occurs at positions 6, 9, and 12.

The protein belongs to the ODC antizyme family. Interacts with ODC1 and thereby sterically blocks ODC homodimerization. Interacts with AZIN2; this interaction disrupts the interaction between the antizyme and ODC1. Interacts with GGN. Isoform 2 interacts with PPP1R16A; Modulates PPP1CB activity. In terms of tissue distribution, testis-specific. Isoform 2 is expressed in outer dense fibers, fibrous sheath and the connecting piece of sperm.

Its subcellular location is the nucleus. It is found in the cytoplasm. The protein localises to the cell projection. The protein resides in the cilium. It localises to the flagellum. Its function is as follows. Ornithine decarboxylase (ODC) antizyme protein that negatively regulates ODC activity and intracellular polyamine biosynthesis and uptake in response to increased intracellular polyamine levels. Binds to ODC monomers, inhibiting the assembly of the functional ODC homodimers. Does not target the ODC monomers for degradation, which allows a protein synthesis-independent restoration of ODC activity. Stabilizes AZIN2 by interfering with its ubiquitination. Involved in the translocation of AZNI2 from ER-Golgi intermediate compartment (ERGIC) to the cytosol. Probably plays a key role in spermatogenesis by regulating the intracellular concentration of polyamines in haploid germ cells. In terms of biological role, does not possess antizyme activity. Modulates PPP1CB activity through its interaction with PPP1R16A. This Rattus norvegicus (Rat) protein is Ornithine decarboxylase antizyme 3.